Here is a 357-residue protein sequence, read N- to C-terminus: Palmitoyltransferase ZDHHC20-A (357 aa).

At 1 to 14 (MAPSHAVRCCQRGL) the chain is on the cytoplasmic side. The chain crosses the membrane as a helical span at residues 15-35 (SWIPVIFINLVVCWSYYAYVV). Residues 36 to 50 (ELCIYTIPNVNEQVI) lie on the Lumenal side of the membrane. A helical membrane pass occupies residues 51–71 (YLVVFHAFFFMFMWSYWKTIS). Residues 72 to 166 (SKPTNPSKEF…NNCVGFSNYK (95 aa)) are Cytoplasmic-facing. Positions 123–173 (RYCDRCQLIKPDRCHHCSTCDKCVLKMDHHCPWVNNCVGFSNYKFFVLFLA) constitute a DHHC domain. Catalysis depends on C153, which acts as the S-palmitoyl cysteine intermediate. Residues 167 to 187 (FFVLFLAYSMLYCVYIAATVL) form a helical membrane-spanning segment. Over 188-204 (QYFIKFWTNQLPDTHAK) the chain is Lumenal. The helical transmembrane segment at 205–228 (FHVLFLFFVAAMFFISILSLFSYH) threads the bilayer. Residues 229–357 (LWLVGKNRTT…PVCVTLENES (129 aa)) lie on the Cytoplasmic side of the membrane.

This sequence belongs to the DHHC palmitoyltransferase family.

It localises to the golgi apparatus membrane. The protein resides in the cell membrane. It is found in the cytoplasm. The protein localises to the perinuclear region. Its subcellular location is the endoplasmic reticulum membrane. It localises to the endoplasmic reticulum-Golgi intermediate compartment membrane. It carries out the reaction L-cysteinyl-[protein] + hexadecanoyl-CoA = S-hexadecanoyl-L-cysteinyl-[protein] + CoA. It catalyses the reaction L-cysteinyl-[protein] + tetradecanoyl-CoA = S-tetradecanoyl-L-cysteinyl-[protein] + CoA. The enzyme catalyses L-cysteinyl-[protein] + octadecanoyl-CoA = S-octadecanoyl-L-cysteinyl-[protein] + CoA. In terms of biological role, palmitoyltransferase that could catalyze the addition of palmitate onto various protein substrates. Catalyzes palmitoylation of Cys residues on protein substrates and has a preference for acyl-CoA with C16 fatty acid chains but may also utilize acyl-CoA with C14 and C18 fatty acid chains. The protein is Palmitoyltransferase ZDHHC20-A of Danio rerio (Zebrafish).